The sequence spans 431 residues: Keratin, type I cytoskeletal 40 (431 aa).

Residues 1–89 are head; the sequence is MASDCSPTGC…CEDGVFNSNE (89 aa). The IF rod domain maps to 89–400; the sequence is EKETMQFLND…GLLDSEDSRL (312 aa). Residues 90-124 are coil 1A; that stretch reads KETMQFLNDRLASYLEKVRGLEELNAELECRIREQ. Residues 125–135 are linker 1; it reads CEEDVPLVCPD. Residues 136–236 form a coil 1B region; sequence YQCYFDTIED…HEEEVNVLRG (101 aa). The linker 12 stretch occupies residues 237–252; that stretch reads QLGDRLSVELDTAPTT. The tract at residues 253 to 396 is coil 2; sequence DLNRVLDEMR…NTYQGLLDSE (144 aa). A tail region spans residues 397-431; sequence DSRLPCNPCSATSMSNDTCEPCSAYVICTVENSCP.

Belongs to the intermediate filament family. As to quaternary structure, heterotetramer of two type I and two type II keratins.

Its function is as follows. May play a role in late hair differentiation. The protein is Keratin, type I cytoskeletal 40 (KRT40) of Bos taurus (Bovine).